The sequence spans 915 residues: MFAVHLVAFYFTKLKEDQIKKVDRFLYHMRLSDETLVDIMARFQAEMEKGLGKDTNPTASVKMLPTFVRAIPDGSENGEFLSLDLGGSKFRVLKVQVSQEGQQNVQMESQFYPMPNEITRGNGTELFDYVADCLADFMKTKNLTHKKLPLGFTFSFPCRQNKLEEGVLLSWTKKFKARGVQDTDVVNRLATAMKKHKDLDVDILALVNDTVGTMMTCAYDDPNCEVGVIIGTGTNACYMEDMSNIDLVEGDEGRMCINTEWGAFGDDGALEDIRTEFDRELDLGSLNPGKQLFEKMISGLYMGELVRLILLKMAKVGLLFGGAKSSALHTKGKIETQHVAAMEMSKEGLANTREILVDLGLEPSESDCIAVQHVCTIVSFRSANLCAAALATILTRLRENKKLARLRTTVGMDGTLYKTHPQYPKRLHKVVRRLVPNCDVRFLLSESGSTKGAAMVTAVASRVQAQRKQIDKVLALFQLTREQLLGVRDKMRAELEYGLKKKTHSLATVKMLPTYVYGMPDGTEKGKFLALDLGGTNFRVLLVKIRRRSVRMYNKIFAIPLEIMQGTGEELFDHIVQCIADFLDYMGLKGAQLPLGFTFSFPCRQTCIDKGTLVGWTKGFKATDCEGEDVVDMLREAIKRRNEFDLDIVAIVNDTVGTMMTCGYEDPRCEIGLIAGTGSNVCYMEEMRNIELVDGDEGRMCVNTEWGGFGDNGCIDDIRTQYDKEVDEGSLNAGKQRYEKMTSGMYLGEIVRRILIDLTRQGLLFRGQISERLRTRGIFETKFLSQIESDRLALLQVRRILQQLGLDSTCEDSIVVKEVCGAVSRRAAQMCGAGMAAIVEKRREDQGLQHFKVTVGVDGTLYKLHPHFSRILQETVKELAPQCDVTFMLSEDGSGKGAALITAVAKRLQQPRKDI.

The segment at 1-20 is mitochondrial-binding peptide (MBP); it reads MFAVHLVAFYFTKLKEDQIK. Hexokinase domains lie at 16 to 458 and 464 to 903; these read EDQI…MVTA and QAQR…LITA. ATP-binding positions include arginine 30 and 84–89; that span reads DLGGSK. The hexokinase small subdomain 1 stretch occupies residues 73-207; that stretch reads DGSENGEFLS…DLDVDILALV (135 aa). 84–91 lines the D-glucose 6-phosphate pocket; the sequence is DLGGSKFR. D-glucose-binding positions include serine 155, 172-173, and 208-209; these read TK and ND. The hexokinase large subdomain 1 stretch occupies residues 208–447; that stretch reads NDTVGTMMTC…CDVRFLLSES (240 aa). Positions 209 and 232 each coordinate D-glucose 6-phosphate. D-glucose contacts are provided by residues asparagine 235, glutamate 260, and 291–294; that span reads QLFE. 413–415 is a D-glucose 6-phosphate binding site; it reads DGT. An ATP-binding site is contributed by 425-426; it reads KR. Residues serine 449 and 532–536 each bind D-glucose 6-phosphate; that span reads DLGGT. A hexokinase small subdomain 2 region spans residues 521 to 652; sequence DGTEKGKFLA…EFDLDIVAIV (132 aa). An ATP-binding site is contributed by 532-537; sequence DLGGTN. D-glucose-binding positions include 600–601, 617–618, and 653–654; these read SF, TK, and ND. The tract at residues 653-892 is hexokinase large subdomain 2; sequence NDTVGTMMTC…CDVTFMLSED (240 aa). D-glucose 6-phosphate-binding residues include aspartate 654 and threonine 677. Residue threonine 677 participates in ATP binding. D-glucose contacts are provided by residues 679 to 680, glutamate 705, and glutamate 739; that span reads SN. ATP-binding positions include 744–745, 781–785, and 860–864; these read GM, TKFLS, and TLYKL. Residues 858–860 and serine 894 contribute to the D-glucose 6-phosphate site; that span reads DGT.

Belongs to the hexokinase family. As to expression, widely expressed. Detected in retina, brain, cerebellum, liver, lung, kidney, spleen, pancreas and intestine.

It localises to the cytoplasm. It is found in the mitochondrion membrane. The protein resides in the photoreceptor inner segment. The catalysed reaction is a D-hexose + ATP = a D-hexose 6-phosphate + ADP + H(+). The enzyme catalyses D-glucose + ATP = D-glucose 6-phosphate + ADP + H(+). The protein operates within carbohydrate metabolism; hexose metabolism. It functions in the pathway carbohydrate degradation; glycolysis; D-glyceraldehyde 3-phosphate and glycerone phosphate from D-glucose: step 1/4. Functionally, catalyzes the phosphorylation of hexose to hexose 6-phosphate, although at very low level compared to other hexokinases. Has low glucose phosphorylating activity compared to other hexokinases. Involved in glucose homeostasis and hepatic lipid accumulation. Required to maintain whole-body glucose homeostasis during pregnancy; however additional evidences are required to confirm this role. The chain is Hexokinase HKDC1 from Mus musculus (Mouse).